The chain runs to 687 residues: Putative ammonium transporter 3 (687 aa).

11 helical membrane passes run 39–59 (AVWI…FGLL), 77–97 (VVDV…FSYG), 134–154 (ASFL…SGAV), 162–182 (SYIL…HWVW), 196–216 (FAGC…ATVF), 240–260 (LGTF…VWGI), 272–292 (AVAT…ISFV), 299–319 (VNFL…ICAV), 323–343 (WHAL…LPLL), 352–372 (VGIV…VGIF), and 404–424 (CTAA…FLIS). Disordered regions lie at residues 521 to 544 (RTNA…FNNQ), 549 to 568 (AVSS…RRTE), and 592 to 687 (PPEE…NPPV). Over residues 549–564 (AVSSTVSTARNGPSTG) the composition is skewed to polar residues. Composition is skewed to low complexity over residues 614-632 (SPSS…SPSI) and 648-665 (STAS…KNST).

Belongs to the ammonia transporter channel (TC 1.A.11.2) family.

The protein localises to the membrane. Its function is as follows. Involved in the uptake of ammonia. This chain is Putative ammonium transporter 3 (amt-3), found in Caenorhabditis elegans.